We begin with the raw amino-acid sequence, 387 residues long: Pepsin A (387 aa).

Positions 1 to 16 are cleaved as a signal peptide; it reads MKKLLLLLGLVALSEC. A propeptide spans 17-61 (activation peptide); sequence LYKVPLVKKKSLRQNLIENGLLKDFLAKHNVNPASKYFPTEAATE. The 310-residue stretch at 75–384 folds into the Peptidase A1 domain; that stretch reads YFGTIGIGTP…DRGNNRVGLA (310 aa). Residue Asp-93 is part of the active site. An intrachain disulfide couples Cys-106 to Cys-111. Ser-129 carries the phosphoserine modification. The cysteines at positions 267 and 271 are disulfide-linked. Residue Asp-276 is part of the active site. Residues Cys-310 and Cys-343 are joined by a disulfide bond.

Belongs to the peptidase A1 family.

It is found in the secreted. It carries out the reaction Preferential cleavage: hydrophobic, preferably aromatic, residues in P1 and P1' positions. Cleaves 1-Phe-|-Val-2, 4-Gln-|-His-5, 13-Glu-|-Ala-14, 14-Ala-|-Leu-15, 15-Leu-|-Tyr-16, 16-Tyr-|-Leu-17, 23-Gly-|-Phe-24, 24-Phe-|-Phe-25 and 25-Phe-|-Tyr-26 bonds in the B chain of insulin.. Its function is as follows. Shows particularly broad specificity; although bonds involving phenylalanine and leucine are preferred, many others are also cleaved to some extent. The sequence is that of Pepsin A (PGA) from Suncus murinus (Asian house shrew).